Reading from the N-terminus, the 373-residue chain is tRNA (guanine(26)-N(2))-dimethyltransferase (373 aa).

Residues 2-365 (KIISEGETKL…AELSDLVVLI (364 aa)) form the Trm1 methyltransferase domain. Residues Arg-35, Arg-66, Asp-86, Asp-113, and Ala-114 each contribute to the S-adenosyl-L-methionine site.

The protein belongs to the class I-like SAM-binding methyltransferase superfamily. Trm1 family.

It carries out the reaction guanosine(26) in tRNA + 2 S-adenosyl-L-methionine = N(2)-dimethylguanosine(26) in tRNA + 2 S-adenosyl-L-homocysteine + 2 H(+). Dimethylates a single guanine residue at position 26 of a number of tRNAs using S-adenosyl-L-methionine as donor of the methyl groups. This is tRNA (guanine(26)-N(2))-dimethyltransferase from Methanococcus maripaludis (strain C7 / ATCC BAA-1331).